Reading from the N-terminus, the 142-residue chain is Inner membrane protein YqaA (142 aa).

The Cytoplasmic segment spans residues 1–2 (MS). The helical transmembrane segment at 3 to 23 (EALSLFSLFASSFLSATLLPG) threads the bilayer. At 24 to 26 (NSE) the chain is on the periplasmic side. A helical membrane pass occupies residues 27–47 (VVLVAMLLSGISHPWVLVLTA). Over 48–86 (TMGNSLGGLTNVILGRFFPLRKTSRWQEKATGWLKRYGA) the chain is Cytoplasmic. A helical membrane pass occupies residues 87-107 (VTLLLSWMPVVGDLLCLLAGW). Residues 108-142 (MRISWGPVIFFLCLGKALRYVAVAAATVQGMMWWH) are Periplasmic-facing.

It to H.influenzae HI_0489.

The protein resides in the cell inner membrane. The chain is Inner membrane protein YqaA (yqaA) from Escherichia coli (strain K12).